The primary structure comprises 414 residues: Serine hydroxymethyltransferase (414 aa).

(6S)-5,6,7,8-tetrahydrofolate-binding positions include Leu117 and 121 to 123 (GHL). At Lys226 the chain carries N6-(pyridoxal phosphate)lysine. (6S)-5,6,7,8-tetrahydrofolate contacts are provided by residues Glu241 and 349-351 (TPF).

Belongs to the SHMT family. In terms of assembly, homodimer. The cofactor is pyridoxal 5'-phosphate.

The protein localises to the cytoplasm. The enzyme catalyses (6R)-5,10-methylene-5,6,7,8-tetrahydrofolate + glycine + H2O = (6S)-5,6,7,8-tetrahydrofolate + L-serine. It functions in the pathway one-carbon metabolism; tetrahydrofolate interconversion. It participates in amino-acid biosynthesis; glycine biosynthesis; glycine from L-serine: step 1/1. In terms of biological role, catalyzes the reversible interconversion of serine and glycine with tetrahydrofolate (THF) serving as the one-carbon carrier. Also exhibits THF-independent aldolase activity toward beta-hydroxyamino acids, producing glycine and aldehydes, via a retro-aldol mechanism. This Methanothrix thermoacetophila (strain DSM 6194 / JCM 14653 / NBRC 101360 / PT) (Methanosaeta thermophila) protein is Serine hydroxymethyltransferase.